An 86-amino-acid chain; its full sequence is MATKKAGGSSRNGRDSAGRRLGVKKADGQYVIPGNIIVRQRGTKIHPGTNVGLGKDHTIFALIEGRVEFLTKRNHKIVNVKEIASA.

The disordered stretch occupies residues 1-24 (MATKKAGGSSRNGRDSAGRRLGVK).

Belongs to the bacterial ribosomal protein bL27 family.

In Rickettsia felis (strain ATCC VR-1525 / URRWXCal2) (Rickettsia azadi), this protein is Large ribosomal subunit protein bL27.